Consider the following 369-residue polypeptide: Signal recognition particle receptor FtsY (369 aa).

Residues 20 to 42 (GEENKKEPETRQTDQLESKKEET) show a composition bias toward basic and acidic residues. The segment at 20–58 (GEENKKEPETRQTDQLESKKEETIQQQQNVQQPQAENKI) is disordered. Residues 44–53 (QQQQNVQQPQ) are compositionally biased toward low complexity. GTP contacts are provided by residues 180-187 (GVNGVGKT), 262-266 (DTAGR), and 320-323 (TKVD).

The protein belongs to the GTP-binding SRP family. FtsY subfamily. As to quaternary structure, part of the signal recognition particle protein translocation system, which is composed of SRP and FtsY.

The protein localises to the cell membrane. The protein resides in the cytoplasm. The catalysed reaction is GTP + H2O = GDP + phosphate + H(+). In terms of biological role, involved in targeting and insertion of nascent membrane proteins into the cytoplasmic membrane. Acts as a receptor for the complex formed by the signal recognition particle (SRP) and the ribosome-nascent chain (RNC). This chain is Signal recognition particle receptor FtsY, found in Sulfolobus acidocaldarius (strain ATCC 33909 / DSM 639 / JCM 8929 / NBRC 15157 / NCIMB 11770).